The primary structure comprises 192 residues: uncharacterized protein (192 aa).

The region spanning 29–160 is the Nudix hydrolase domain; sequence QRQAAVLIPV…PLDVYRRGNS (132 aa). The Nudix box motif lies at 67–89; that stretch reads GAVDSTDASLIAAALREAQEEVA. Positions 83 and 87 each coordinate Mg(2+).

Belongs to the Nudix hydrolase family. PCD1 subfamily. The cofactor is Mn(2+). Mg(2+) serves as cofactor.

Functionally, probably mediates the hydrolysis of some nucleoside diphosphate derivatives. This is an uncharacterized protein from Salmonella dublin (strain CT_02021853).